The chain runs to 399 residues: MAKEKFARNKPHVNIGTIGHVDHGKTTLTAAITAVLAVTNGAKMMDYDAIDNAPEERERGITIATSHVEYETNNRHYAHVDCPGHADYVKNMITGAAQMDGAILVVSAADGPMPQTREHILLSKQVGVPYIVVFMNKEDMVDDEELLELVEMEIRELLDMYDFPGDDTPIVAGSAKEALDEAKTGTLGPWSAKIQKLMAAVDEYIPEPTREVDRDFLMPVEDVFSISGRGTVVTGRIERGTVKIGDAIEIVGIRDTQKTTVTGIEMFRKEMDQGLAGDNCGVLVRGIGKDDVERGQVLCKPGTINPHTKFTAEIYVLSKEEGGRHTPFFTNYRPQFYVRTTDVTGAIYLPEGTEMVMPGDNVSITVELIHPIAMEKGTKFAIREGGRTVGAGVVAEILA.

In terms of domain architecture, tr-type G spans 10 to 209 (KPHVNIGTIG…AVDEYIPEPT (200 aa)). The segment at 19–26 (GHVDHGKT) is G1. 19-26 (GHVDHGKT) provides a ligand contact to GTP. Threonine 26 serves as a coordination point for Mg(2+). Residues 60–64 (GITIA) are G2. Residues 81-84 (DCPG) form a G3 region. GTP-binding positions include 81–85 (DCPGH) and 136–139 (NKED). A G4 region spans residues 136 to 139 (NKED). The tract at residues 174–176 (SAK) is G5.

Belongs to the TRAFAC class translation factor GTPase superfamily. Classic translation factor GTPase family. EF-Tu/EF-1A subfamily. Monomer.

The protein resides in the cytoplasm. It catalyses the reaction GTP + H2O = GDP + phosphate + H(+). In terms of biological role, GTP hydrolase that promotes the GTP-dependent binding of aminoacyl-tRNA to the A-site of ribosomes during protein biosynthesis. This Sulfurimonas denitrificans (strain ATCC 33889 / DSM 1251) (Thiomicrospira denitrificans (strain ATCC 33889 / DSM 1251)) protein is Elongation factor Tu.